A 718-amino-acid chain; its full sequence is Zinc finger protein 39 (718 aa).

Residues valine 59–aspartate 130 enclose the KRAB domain. Residues phenylalanine 298–histidine 320 form a C2H2-type 1 zinc finger. The C2H2-type 2; degenerate zinc-finger motif lies at histidine 353–proline 375. 11 C2H2-type zinc fingers span residues tyrosine 409–histidine 431, tyrosine 437–histidine 459, tyrosine 465–histidine 487, tyrosine 493–histidine 515, tyrosine 521–histidine 543, tyrosine 549–histidine 571, tyrosine 577–histidine 599, tyrosine 605–histidine 627, tyrosine 633–histidine 655, tyrosine 661–histidine 683, and phenylalanine 689–histidine 711.

As to expression, predominantly in the spermatocytes and spermatids of testes.

The protein localises to the nucleus. A putative DNA-binding regulatory protein associated with meiosis in spermatogenesis. The polypeptide is Zinc finger protein 39 (Zfp39) (Mus musculus (Mouse)).